Reading from the N-terminus, the 274-residue chain is NAD(P)H-quinone oxidoreductase subunit K, chloroplastic (274 aa).

Composition is skewed to polar residues over residues M1 to S10 and S18 to D27. The disordered stretch occupies residues M1–D27. Residues C90, C91, C155, and C186 each coordinate [4Fe-4S] cluster.

This sequence belongs to the complex I 20 kDa subunit family. In terms of assembly, NDH is composed of at least 16 different subunits, 5 of which are encoded in the nucleus. [4Fe-4S] cluster serves as cofactor.

It localises to the plastid. The protein localises to the chloroplast thylakoid membrane. The catalysed reaction is a plastoquinone + NADH + (n+1) H(+)(in) = a plastoquinol + NAD(+) + n H(+)(out). It catalyses the reaction a plastoquinone + NADPH + (n+1) H(+)(in) = a plastoquinol + NADP(+) + n H(+)(out). Its function is as follows. NDH shuttles electrons from NAD(P)H:plastoquinone, via FMN and iron-sulfur (Fe-S) centers, to quinones in the photosynthetic chain and possibly in a chloroplast respiratory chain. The immediate electron acceptor for the enzyme in this species is believed to be plastoquinone. Couples the redox reaction to proton translocation, and thus conserves the redox energy in a proton gradient. The polypeptide is NAD(P)H-quinone oxidoreductase subunit K, chloroplastic (Chlorokybus atmophyticus (Soil alga)).